We begin with the raw amino-acid sequence, 257 residues long: Zinc transporter ZupT (257 aa).

The next 8 helical transmembrane spans lie at Leu5–Gly25, Val32–Met52, Gly61–Leu81, Ala109–Val129, Leu137–Ala157, Ile171–Ile191, Met195–Leu215, and Gly236–Phe256. Fe(2+) is bound by residues Asn120 and Glu123. Positions 123 and 148 each coordinate Zn(2+). Fe(2+) is bound by residues Asn149, Glu152, and Glu181. Residue Glu152 participates in Zn(2+) binding.

This sequence belongs to the ZIP transporter (TC 2.A.5) family. ZupT subfamily.

It is found in the cell inner membrane. It carries out the reaction Zn(2+)(in) = Zn(2+)(out). In terms of biological role, mediates zinc uptake. May also transport other divalent cations. The polypeptide is Zinc transporter ZupT (Enterobacter sp. (strain 638)).